A 277-amino-acid polypeptide reads, in one-letter code: Caspase-3 (277 aa).

N-acetylmethionine is present on Met1. Propeptides lie at residues 1-9 (MENTENSVD) and 10-28 (SKSI…QSMD). Positions 1–10 (MENTENSVDS) are enriched in polar residues. Residues 1–20 (MENTENSVDSKSIKNLEPKI) are disordered. The residue at position 11 (Lys11) is an N6-acetyllysine. Residues 11 to 20 (KSIKNLEPKI) are compositionally biased toward basic and acidic residues. Ser26 carries the post-translational modification Phosphoserine. Catalysis depends on residues His121 and Cys163. At Cys163 the chain carries S-nitrosocysteine; in inhibited form.

This sequence belongs to the peptidase C14A family. Heterotetramer that consists of two anti-parallel arranged heterodimers, each one formed by a 17 kDa (p17) and a 12 kDa (p12) subunit. Interacts with BIRC6/bruce. Post-translationally, cleavage by granzyme B, caspase-6, caspase-8 and caspase-10 generates the two active subunits. Additional processing of the propeptides is likely due to the autocatalytic activity of the activated protease. Active heterodimers between the small subunit of caspase-7 protease and the large subunit of caspase-3 also occur and vice versa. In terms of processing, S-nitrosylated on its catalytic site cysteine in unstimulated cell lines and denitrosylated upon activation of the Fas apoptotic pathway, associated with an increase in intracellular caspase activity. Fas therefore activates caspase-3 not only by inducing the cleavage of the caspase zymogen to its active subunits, but also by stimulating the denitrosylation of its active site thiol. Ubiquitinated by BIRC6; this activity is inhibited by DIABLO/SMAC.

It localises to the cytoplasm. It catalyses the reaction Strict requirement for an Asp residue at positions P1 and P4. It has a preferred cleavage sequence of Asp-Xaa-Xaa-Asp-|- with a hydrophobic amino-acid residue at P2 and a hydrophilic amino-acid residue at P3, although Val or Ala are also accepted at this position.. Inhibited by BIRC6; following inhibition of BIRC6-caspase binding by DIABLO/SMAC, BIRC6 is subjected to caspase cleavage, leading to an increase in active caspases. Functionally, involved in the activation cascade of caspases responsible for apoptosis execution. At the onset of apoptosis, it proteolytically cleaves poly(ADP-ribose) polymerase PARP1 at a '216-Asp-|-Gly-217' bond. Cleaves and activates sterol regulatory element binding proteins (SREBPs) between the basic helix-loop-helix leucine zipper domain and the membrane attachment domain. Cleaves and activates caspase-6, -7 and -9 (CASP6, CASP7 and CASP9, respectively). Cleaves and inactivates interleukin-18 (IL18). Triggers cell adhesion in sympathetic neurons through RET cleavage. Cleaves IL-1 beta between an Asp and an Ala, releasing the mature cytokine which is involved in a variety of inflammatory processes. Cleaves and inhibits serine/threonine-protein kinase AKT1 in response to oxidative stress. Acts as an inhibitor of type I interferon production during virus-induced apoptosis by mediating cleavage of antiviral proteins CGAS, IRF3 and MAVS, thereby preventing cytokine overproduction. Also involved in pyroptosis by mediating cleavage and activation of gasdermin-E (GSDME). Cleaves XRCC4 and phospholipid scramblase proteins XKR4, XKR8 and XKR9, leading to promote phosphatidylserine exposure on apoptotic cell surface. Cleaves BIRC6 following inhibition of BIRC6-caspase binding by DIABLO/SMAC. The polypeptide is Caspase-3 (CASP3) (Pan troglodytes (Chimpanzee)).